The following is a 521-amino-acid chain: Probable tRNA (uracil-O(2)-)-methyltransferase (521 aa).

It belongs to the TRM44 family.

Its subcellular location is the cytoplasm. It carries out the reaction uridine(44) in tRNA(Ser) + S-adenosyl-L-methionine = 2'-O-methyluridine(44) in tRNA(Ser) + S-adenosyl-L-homocysteine + H(+). Its function is as follows. Probable adenosyl-L-methionine (AdoMet)-dependent tRNA (uracil-O(2)-)-methyltransferase. The polypeptide is Probable tRNA (uracil-O(2)-)-methyltransferase (trmt44) (Drosophila melanogaster (Fruit fly)).